An 82-amino-acid chain; its full sequence is Neuropeptide-like peptide 36 (82 aa).

This is Neuropeptide-like peptide 36 (nlp-36) from Caenorhabditis elegans.